The sequence spans 318 residues: Small ribosomal subunit protein uS3 (318 aa).

The KH type-2 domain maps to M17–K86. The segment covering S198–K229 has biased composition (basic and acidic residues). Positions S198 to E275 are disordered. The segment covering A234–A250 has biased composition (pro residues). Residues E253 to E275 show a composition bias toward acidic residues.

This sequence belongs to the universal ribosomal protein uS3 family. As to quaternary structure, part of the 30S ribosomal subunit.

In terms of biological role, binds the lower part of the 30S subunit head. This chain is Small ribosomal subunit protein uS3, found in Methanosarcina acetivorans (strain ATCC 35395 / DSM 2834 / JCM 12185 / C2A).